Consider the following 291-residue polypeptide: 3-methyl-2-oxobutanoate hydroxymethyltransferase (291 aa).

A compositionally biased stretch (polar residues) spans 1 to 10 (MTQLSAAQTP). The disordered stretch occupies residues 1 to 20 (MTQLSAAQTPQPKPADGNRA). 2 residues coordinate Mg(2+): Asp71 and Asp110. Residues 71–72 (DS), Asp110, and Lys140 each bind 3-methyl-2-oxobutanoate. Glu142 is a binding site for Mg(2+). Glu208 serves as the catalytic Proton acceptor.

The protein belongs to the PanB family. In terms of assembly, homodecamer; pentamer of dimers. Mg(2+) is required as a cofactor.

Its subcellular location is the cytoplasm. The enzyme catalyses 3-methyl-2-oxobutanoate + (6R)-5,10-methylene-5,6,7,8-tetrahydrofolate + H2O = 2-dehydropantoate + (6S)-5,6,7,8-tetrahydrofolate. The protein operates within cofactor biosynthesis; (R)-pantothenate biosynthesis; (R)-pantoate from 3-methyl-2-oxobutanoate: step 1/2. Functionally, catalyzes the reversible reaction in which hydroxymethyl group from 5,10-methylenetetrahydrofolate is transferred onto alpha-ketoisovalerate to form ketopantoate. The polypeptide is 3-methyl-2-oxobutanoate hydroxymethyltransferase (Streptomyces coelicolor (strain ATCC BAA-471 / A3(2) / M145)).